Reading from the N-terminus, the 909-residue chain is Cutinase transcription factor 1 alpha (909 aa).

Residues 1–51 (MSSGDAPPQAQPQPHQQEQPNQRQSSTPAPSAAPVPPAPSTSTSNSAGGVS) are disordered. The segment covering 12-30 (PQPHQQEQPNQRQSSTPAP) has biased composition (low complexity). The segment at residues 61–90 (CETCHARKVRCDAASLGVPCTNCVAFQIEC) is a DNA-binding region (zn(2)-C6 fungal-type). 3 disordered regions span residues 95-159 (PKRK…EAQA), 651-757 (AEGK…SFSV), and 841-878 (LPQG…QGQA). Positions 110-119 (KDSDSDRGDG) are enriched in basic and acidic residues. Residues 142–156 (VFHSHNGTPPTTLTE) are compositionally biased toward polar residues. Positions 669 to 683 (QHSRQQEAPKRKYDE) are enriched in basic and acidic residues. Polar residues-rich tracts occupy residues 704 to 717 (PQTP…TSSM), 737 to 755 (GGTN…NPSF), and 865 to 878 (SPDS…QGQA).

Its subcellular location is the nucleus. The polypeptide is Cutinase transcription factor 1 alpha (CTF1-ALPHA) (Fusarium vanettenii (Neocosmospora pisi)).